We begin with the raw amino-acid sequence, 993 residues long: UPF0182 protein ROP_64500 (993 aa).

7 helical membrane passes run 18-38 (VLLV…RLIS), 63-83 (LLLF…ALLL), 114-134 (LFGL…AQSS), 174-194 (WLFV…YIFG), 211-231 (VQLA…YWFD), 260-280 (KLIL…AIFL), and 288-308 (MATA…PLVV). A disordered region spans residues 904-948 (TGSVATAPSAEEGTPPETGTTPPVEQGAAPPAPTAPATPPSGTDV). The span at 908–926 (ATAPSAEEGTPPETGTTPP) shows a compositional bias: low complexity. The segment covering 933-942 (PPAPTAPATP) has biased composition (pro residues).

The protein belongs to the UPF0182 family.

It localises to the cell membrane. The chain is UPF0182 protein ROP_64500 from Rhodococcus opacus (strain B4).